Reading from the N-terminus, the 325-residue chain is MKPILLQGHERSITQIKYNREGDLLFSVAKDPIANVWYSVNGERLGTYNGHTGAVWCVDVDWDTKNVLTGSADNSCRLWDCETGKQLALLETSSAVRTCGFDFSGNIIMFSTDKQMGYQCFLNYYDLRDPQQIEDNQPYISVPCSESKITSAVWGPLGEFVIAGHENGEINQFSAKSGEVLKKAKEHTKQINDIQSSVDLTMIISASKDCTAKMFDSSTLEHVKTFKTERPVNSAAISPIMDHVVMGGGQEAMEVTTTSTRIGKFEARFFHAAYEEEFGRVKGHFGPINCVAFHPDGKSYSSGGEDGYVRIHYFDPHYFDFELEA.

5 WD repeats span residues 8–47 (GHER…RLGT), 50–89 (GHTG…QLAL), 144–183 (CSES…VLKK), 186–225 (EHTK…HVKT), and 283–324 (GHFG…FELE).

It belongs to the eIF-3 subunit I family. In terms of assembly, component of the eukaryotic translation initiation factor 3 (eIF-3) complex, which is composed of 13 subunits: eif3a, eif3b, eif3c, eif3d, eif3e, eif3f, eif3g, eif3h, eif3i, eif3j, eif3k, eif3l and eif3m.

Its subcellular location is the cytoplasm. Functionally, component of the eukaryotic translation initiation factor 3 (eIF-3) complex, which is involved in protein synthesis of a specialized repertoire of mRNAs and, together with other initiation factors, stimulates binding of mRNA and methionyl-tRNAi to the 40S ribosome. The eIF-3 complex specifically targets and initiates translation of a subset of mRNAs involved in cell proliferation. In Danio rerio (Zebrafish), this protein is Eukaryotic translation initiation factor 3 subunit I (eif3i).